We begin with the raw amino-acid sequence, 189 residues long: Anthranilate synthase component 2 (189 aa).

In terms of domain architecture, Glutamine amidotransferase type-1 spans 1–189; it reads MILIIDNYDS…QLLRNFLEYS (189 aa). An L-glutamine-binding site is contributed by 52–54; it reads GPG. Residue Cys-79 is the Nucleophile; for GATase activity of the active site. Residues Gln-83 and 129 to 130 each bind L-glutamine; that span reads SL. Active-site residues include His-169 and Glu-171.

As to quaternary structure, tetramer of two components I and two components II.

It is found in the plastid. Its subcellular location is the chloroplast. The enzyme catalyses chorismate + L-glutamine = anthranilate + pyruvate + L-glutamate + H(+). It functions in the pathway amino-acid biosynthesis; L-tryptophan biosynthesis; L-tryptophan from chorismate: step 1/5. The polypeptide is Anthranilate synthase component 2 (trpG) (Pyropia yezoensis (Susabi-nori)).